We begin with the raw amino-acid sequence, 180 residues long: Shikimate kinase (180 aa).

19–24 (GAGKTT) contributes to the ATP binding site. T23 is a binding site for Mg(2+). The substrate site is built by D41, R65, and G87. R125 serves as a coordination point for ATP. R144 provides a ligand contact to substrate.

The protein belongs to the shikimate kinase family. As to quaternary structure, monomer. Mg(2+) is required as a cofactor.

The protein resides in the cytoplasm. The enzyme catalyses shikimate + ATP = 3-phosphoshikimate + ADP + H(+). It participates in metabolic intermediate biosynthesis; chorismate biosynthesis; chorismate from D-erythrose 4-phosphate and phosphoenolpyruvate: step 5/7. Catalyzes the specific phosphorylation of the 3-hydroxyl group of shikimic acid using ATP as a cosubstrate. This chain is Shikimate kinase, found in Acinetobacter baylyi (strain ATCC 33305 / BD413 / ADP1).